We begin with the raw amino-acid sequence, 244 residues long: MKKIVIKIGGNAATQLTPAFFDTIKFWQKQHYKIAIVHGGGDTISALMSQLNEPVQKINGIRFTTQNGINITKMALLGQVQPALLESCRVNGLSVIGLNAASDQLLTGHTIDQDTFGYVGNIHQVNTKLIHNLWEKNLIPIIAPMAITNSGQWLNVNADHAATALAKYLKADELYLLTDVSGVKIKGNVLQNLTSKTMEELQKKQMITGGMIPKVNSALFAARHGVRAVHITNTVTHPGTIVTI.

Substrate is bound by residues 40–41 (GG), Arg62, and Asn155.

The protein belongs to the acetylglutamate kinase family. ArgB subfamily.

It localises to the cytoplasm. The enzyme catalyses N-acetyl-L-glutamate + ATP = N-acetyl-L-glutamyl 5-phosphate + ADP. The protein operates within amino-acid biosynthesis; L-arginine biosynthesis; N(2)-acetyl-L-ornithine from L-glutamate: step 2/4. In terms of biological role, catalyzes the ATP-dependent phosphorylation of N-acetyl-L-glutamate. This Leuconostoc mesenteroides subsp. mesenteroides (strain ATCC 8293 / DSM 20343 / BCRC 11652 / CCM 1803 / JCM 6124 / NCDO 523 / NBRC 100496 / NCIMB 8023 / NCTC 12954 / NRRL B-1118 / 37Y) protein is Acetylglutamate kinase.